A 111-amino-acid polypeptide reads, in one-letter code: Nucleoid-associated protein NGK_1136 (111 aa).

The protein belongs to the YbaB/EbfC family. As to quaternary structure, homodimer.

The protein resides in the cytoplasm. The protein localises to the nucleoid. Its function is as follows. Binds to DNA and alters its conformation. May be involved in regulation of gene expression, nucleoid organization and DNA protection. This is Nucleoid-associated protein NGK_1136 from Neisseria gonorrhoeae (strain NCCP11945).